Here is a 357-residue protein sequence, read N- to C-terminus: DNA replication and repair protein RecF (357 aa).

30–37 (GANGSGKT) is an ATP binding site.

The protein belongs to the RecF family.

Its subcellular location is the cytoplasm. Functionally, the RecF protein is involved in DNA metabolism; it is required for DNA replication and normal SOS inducibility. RecF binds preferentially to single-stranded, linear DNA. It also seems to bind ATP. The polypeptide is DNA replication and repair protein RecF (Citrobacter koseri (strain ATCC BAA-895 / CDC 4225-83 / SGSC4696)).